A 158-amino-acid chain; its full sequence is UPF0725 protein At3g57210 (158 aa).

The protein belongs to the UPF0725 (EMB2204) family.

The chain is UPF0725 protein At3g57210 from Arabidopsis thaliana (Mouse-ear cress).